A 470-amino-acid polypeptide reads, in one-letter code: Cytochrome P450 monooxygenase sirC (470 aa).

A helical membrane pass occupies residues 12 to 34; sequence LRGMVVGTIMLLCYRYGLALSIL. Residue Asn399 is glycosylated (N-linked (GlcNAc...) asparagine). A heme-binding site is contributed by Cys410.

Belongs to the cytochrome P450 family. Heme serves as cofactor.

The protein resides in the membrane. The protein operates within mycotoxin biosynthesis. Cytochrome P450 monooxygenase; part of the gene cluster that mediates the biosynthesis of sirodesmin PL, an epipolythiodioxopiperazine (ETP) characterized by a disulfide bridged cyclic dipeptide and that acts as a phytotoxin which is involved in the blackleg didease of canola. SirD catalyzes the O-prenylation of L-tyrosine (L-Tyr) in the presence of dimethylallyl diphosphate (DMAPP) to yield 4-O-dimethylallyl-L-Tyr, and therefore represents probably the first pathway-specific enzyme in the biosynthesis of sirodesmin PL. 4-O-dimethylallyl-L-Tyr, then undergoes condensation with L-Ser in a reaction catalyzed by the non-ribosomal peptide synthase sirP to form the diketopiperazine (DKP) backbone. Further bishydroxylation of the DKP performed by the cytochrome P450 monooxygenase sirC leads to the production of the intermediate phomamide. This step is essential to form the reactive thiol group required for toxicity of sirodesmin PL. The next steps of sirodesmin biosynthesis are not well understood yet, but some predictions could be made from intermediate compounds identification. Phomamide is converted into phomalizarine via oxidation, probably by sirT. Further oxidation, methylation (by sirM or sirN) and reduction steps convert phomalizarine to deacetyl sirodesmin. Finally, acetyltransferase sirH probably acetylates deacetyl sirodesmin to produce sirodesmin PL. The sequence is that of Cytochrome P450 monooxygenase sirC from Leptosphaeria maculans (Blackleg fungus).